The sequence spans 121 residues: MNNAPHLYFAWQQLVEKSQLMLRLATEEQWDELIASEMAYVNAVQEIAHLTEEVAPSTTMQEQLRPMLRLILDNESKVKQLLQIRMDELAKLVGQSSVQKSVLSAYGDQGGFVLAPQDNLF.

The interval 1 to 50 (MNNAPHLYFAWQQLVEKSQLMLRLATEEQWDELIASEMAYVNAVQEIAHL) is required for homodimerization. The segment at 60–98 (MQEQLRPMLRLILDNESKVKQLLQIRMDELAKLVGQSSV) is fliD binding.

Belongs to the FliT family. Homodimer. Interacts with FliD and FlhC.

Its subcellular location is the cytoplasm. The protein localises to the cytosol. Functionally, dual-function protein that regulates the transcription of class 2 flagellar operons and that also acts as an export chaperone for the filament-capping protein FliD. As a transcriptional regulator, acts as an anti-FlhDC factor; it directly binds FlhC, thus inhibiting the binding of the FlhC/FlhD complex to class 2 promoters, resulting in decreased expression of class 2 flagellar operons. As a chaperone, effects FliD transition to the membrane by preventing its premature polymerization, and by directing it to the export apparatus. This chain is Flagellar protein FliT, found in Escherichia coli O9:H4 (strain HS).